The chain runs to 236 residues: Ribose-5-phosphate isomerase A (236 aa).

Residues 28 to 31 (TGST), 83 to 86 (DGAD), and 96 to 99 (KGGG) each bind substrate. E105 acts as the Proton acceptor in catalysis. Residue K123 participates in substrate binding.

The protein belongs to the ribose 5-phosphate isomerase family. In terms of assembly, homodimer.

It carries out the reaction aldehydo-D-ribose 5-phosphate = D-ribulose 5-phosphate. The protein operates within carbohydrate degradation; pentose phosphate pathway; D-ribose 5-phosphate from D-ribulose 5-phosphate (non-oxidative stage): step 1/1. Its function is as follows. Catalyzes the reversible conversion of ribose-5-phosphate to ribulose 5-phosphate. This chain is Ribose-5-phosphate isomerase A, found in Methylorubrum extorquens (strain CM4 / NCIMB 13688) (Methylobacterium extorquens).